We begin with the raw amino-acid sequence, 217 residues long: Large ribosomal subunit protein uL1 (217 aa).

Residue Ser2 is modified to N-acetylserine. A Phosphotyrosine modification is found at Tyr11. 2 positions are modified to N6-acetyllysine: Lys91 and Lys106. Position 118 is an N6-acetyllysine; alternate (Lys118). Residue Lys118 forms a Glycyl lysine isopeptide (Lys-Gly) (interchain with G-Cter in SUMO1); alternate linkage. A Glycyl lysine isopeptide (Lys-Gly) (interchain with G-Cter in SUMO2); alternate cross-link involves residue Lys118.

Belongs to the universal ribosomal protein uL1 family. In terms of assembly, component of the large ribosomal subunit.

The protein localises to the cytoplasm. Component of the large ribosomal subunit. The ribosome is a large ribonucleoprotein complex responsible for the synthesis of proteins in the cell. The protein is Large ribosomal subunit protein uL1 (RPL10A) of Macaca fascicularis (Crab-eating macaque).